A 218-amino-acid chain; its full sequence is Elongation factor Ts (218 aa).

Residues 82-85 are involved in Mg(2+) ion dislocation from EF-Tu; the sequence is TDFV.

Belongs to the EF-Ts family.

Its subcellular location is the cytoplasm. Its function is as follows. Associates with the EF-Tu.GDP complex and induces the exchange of GDP to GTP. It remains bound to the aminoacyl-tRNA.EF-Tu.GTP complex up to the GTP hydrolysis stage on the ribosome. The chain is Elongation factor Ts from Prochlorococcus marinus (strain MIT 9313).